Reading from the N-terminus, the 165-residue chain is SsrA-binding protein (165 aa).

Residues 135 to 158 (QAHDKRQDMARRDAQREVTRELGR) show a composition bias toward basic and acidic residues. Residues 135–165 (QAHDKRQDMARRDAQREVTRELGRRVKGMTN) form a disordered region.

This sequence belongs to the SmpB family.

It localises to the cytoplasm. Functionally, required for rescue of stalled ribosomes mediated by trans-translation. Binds to transfer-messenger RNA (tmRNA), required for stable association of tmRNA with ribosomes. tmRNA and SmpB together mimic tRNA shape, replacing the anticodon stem-loop with SmpB. tmRNA is encoded by the ssrA gene; the 2 termini fold to resemble tRNA(Ala) and it encodes a 'tag peptide', a short internal open reading frame. During trans-translation Ala-aminoacylated tmRNA acts like a tRNA, entering the A-site of stalled ribosomes, displacing the stalled mRNA. The ribosome then switches to translate the ORF on the tmRNA; the nascent peptide is terminated with the 'tag peptide' encoded by the tmRNA and targeted for degradation. The ribosome is freed to recommence translation, which seems to be the essential function of trans-translation. This Mycolicibacterium gilvum (strain PYR-GCK) (Mycobacterium gilvum (strain PYR-GCK)) protein is SsrA-binding protein.